Here is a 62-residue protein sequence, read N- to C-terminus: E3 SUMO-protein ligase EGR2 (62 aa).

3 consecutive C2H2-type zinc fingers follow at residues 1-21 (AEGC…IRIH), 27-49 (FQCA…IRTH), and 55-62 (FACDYCGR).

Belongs to the EGR C2H2-type zinc-finger protein family. Interacts with HCFC1. Interacts with WWP2. Interacts with UBC9. Interacts with CITED1. Interacts (via phosphorylated form) with SFN. In terms of processing, ubiquitinated by WWP2 leading to proteasomal degradation. Acetylated. May be deacetylated by HDAC6, HDAC10 or SIRT1.

The protein localises to the nucleus. It functions in the pathway protein modification; protein sumoylation. Functionally, sequence-specific DNA-binding transcription factor. Plays a role in hindbrain segmentation by regulating the expression of a subset of homeobox containing genes and in Schwann cell myelination by regulating the expression of genes involved in the formation and maintenance of myelin. Binds to two EGR2-consensus sites EGR2A (5'-CTGTAGGAG-3') and EGR2B (5'-ATGTAGGTG-3') in the HOXB3 enhancer and promotes HOXB3 transcriptional activation. Binds to specific DNA sites located in the promoter region of HOXA4, HOXB2 and ERBB2. Regulates hindbrain segmentation by controlling the expression of Hox genes, such as HOXA4, HOXB3 and HOXB2, and thereby specifying odd and even rhombomeres. Promotes the expression of HOXB3 in the rhombomere r5 in the hindbrain. Regulates myelination in the peripheral nervous system after birth, possibly by regulating the expression of myelin proteins, such as MPZ, and by promoting the differentiation of Schwann cells. Involved in the development of the jaw openener musculature, probably by playing a role in its innervation through trigeminal motor neurons. May play a role in adipogenesis, possibly by regulating the expression of CEBPB. In terms of biological role, E3 SUMO-protein ligase helping SUMO1 conjugation to its coregulators NAB1 and NAB2, whose sumoylation down-regulates EGR2 transcriptional activity. This chain is E3 SUMO-protein ligase EGR2 (EGR2), found in Cerdocyon thous (Crab-eating fox).